We begin with the raw amino-acid sequence, 233 residues long: 3-dehydroquinate dehydratase (233 aa).

Residues 34–36 (ELR) and arginine 64 contribute to the 3-dehydroquinate site. Histidine 118 serves as the catalytic Proton donor/acceptor. Lysine 145 (schiff-base intermediate with substrate) is an active-site residue. Residues arginine 185, serine 205, and glutamine 209 each coordinate 3-dehydroquinate.

Belongs to the type-I 3-dehydroquinase family. As to quaternary structure, homodimer.

It carries out the reaction 3-dehydroquinate = 3-dehydroshikimate + H2O. It participates in metabolic intermediate biosynthesis; chorismate biosynthesis; chorismate from D-erythrose 4-phosphate and phosphoenolpyruvate: step 3/7. Its function is as follows. Involved in the third step of the chorismate pathway, which leads to the biosynthesis of aromatic amino acids. Catalyzes the cis-dehydration of 3-dehydroquinate (DHQ) and introduces the first double bond of the aromatic ring to yield 3-dehydroshikimate. This chain is 3-dehydroquinate dehydratase, found in Coxiella burnetii (strain CbuG_Q212) (Coxiella burnetii (strain Q212)).